The sequence spans 76 residues: DNA gyrase inhibitor YacG (76 aa).

Positions 20, 23, 39, and 43 each coordinate Zn(2+). The segment at 54–76 (EEKSIPGAPDLSDSDGWSDDMGY) is disordered. The span at 65–76 (SDSDGWSDDMGY) shows a compositional bias: acidic residues.

Belongs to the DNA gyrase inhibitor YacG family. As to quaternary structure, interacts with GyrB. Requires Zn(2+) as cofactor.

Inhibits all the catalytic activities of DNA gyrase by preventing its interaction with DNA. Acts by binding directly to the C-terminal domain of GyrB, which probably disrupts DNA binding by the gyrase. This chain is DNA gyrase inhibitor YacG, found in Photobacterium profundum (strain SS9).